Reading from the N-terminus, the 64-residue chain is Toxin BmCa-1 (64 aa).

The signal sequence occupies residues 1 to 18 (MNTFVVVFLLLTAILCHA). A propeptide spanning residues 19 to 27 (EHALDETAR) is cleaved from the precursor. Disulfide bonds link Cys-29/Cys-43, Cys-36/Cys-49, and Cys-42/Cys-58.

The protein belongs to the scorpion calcin-like family. In terms of tissue distribution, expressed by the venom gland.

The protein localises to the secreted. May increase intracellular calcium release through the activation of nuclear inositol 1,4,5-trisphosphate receptors (ITPR) of cardiomyocytes, thereby causing an increase in the contraction frequency of these cells. The sequence is that of Toxin BmCa-1 from Olivierus martensii (Manchurian scorpion).